Reading from the N-terminus, the 124-residue chain is Small ribosomal subunit protein eS6 (124 aa).

It belongs to the eukaryotic ribosomal protein eS6 family.

In Methanococcus maripaludis (strain C7 / ATCC BAA-1331), this protein is Small ribosomal subunit protein eS6.